The sequence spans 563 residues: Serine carboxypeptidase S10 family member 2 (563 aa).

Positions 1-23 (MNIKIILLSIILIIQLLLLNNNG) are cleaved as a signal peptide. Residues 24–529 (GIVESKINFS…VPLTLGAWIG (506 aa)) lie on the Extracellular side of the membrane. Asn31, Asn95, Asn110, and Asn213 each carry an N-linked (GlcNAc...) asparagine glycan. Ser225 is a catalytic residue. N-linked (GlcNAc...) asparagine glycans are attached at residues Asn244, Asn328, and Asn382. Residue Asp417 is part of the active site. Asn468 is a glycosylation site (N-linked (GlcNAc...) asparagine). His479 is a catalytic residue. Asn499 carries an N-linked (GlcNAc...) asparagine glycan. Residues 530-550 (ITVGGCAFGFLVGGLIIYIIM) traverse the membrane as a helical segment. Residues 551–563 (KKSSKNGYYKVIQ) are Cytoplasmic-facing.

The protein belongs to the peptidase S10 family.

The protein localises to the membrane. Functionally, probable carboxypeptidase. The polypeptide is Serine carboxypeptidase S10 family member 2 (Dictyostelium discoideum (Social amoeba)).